The following is a 203-amino-acid chain: MSKIIIATANKGKAKEFEKIFAKFNIEVATLADFPEIGEIEETGTTFAENAALKAETVASVLNQTVIADDSGLIVDALDGAPGVYSARYAGVAHDDAKNNEKLLKNLEGVEPDKRTARFHCTLAVATPSEKTSFYTGEVEGVIAEQLCGTNGFGYDPLFFLPEFGLTMAEIPAEKKNEISHRANAIKQLEKDLVEVVEKVTKK.

8 to 13 (TANKGK) is a substrate binding site. Residues Glu-41 and Asp-70 each coordinate Mg(2+). The Proton acceptor role is filled by Asp-70. Residues Ser-71, 153 to 156 (FGYD), Lys-176, and 181 to 182 (HR) each bind substrate.

This sequence belongs to the HAM1 NTPase family. As to quaternary structure, homodimer. Mg(2+) serves as cofactor.

The enzyme catalyses XTP + H2O = XMP + diphosphate + H(+). It catalyses the reaction dITP + H2O = dIMP + diphosphate + H(+). The catalysed reaction is ITP + H2O = IMP + diphosphate + H(+). In terms of biological role, pyrophosphatase that catalyzes the hydrolysis of nucleoside triphosphates to their monophosphate derivatives, with a high preference for the non-canonical purine nucleotides XTP (xanthosine triphosphate), dITP (deoxyinosine triphosphate) and ITP. Seems to function as a house-cleaning enzyme that removes non-canonical purine nucleotides from the nucleotide pool, thus preventing their incorporation into DNA/RNA and avoiding chromosomal lesions. In Listeria monocytogenes serovar 1/2a (strain ATCC BAA-679 / EGD-e), this protein is dITP/XTP pyrophosphatase.